We begin with the raw amino-acid sequence, 806 residues long: Leucine--tRNA ligase (806 aa).

Positions 40-51 (PYPSGKGLHVGH) match the 'HIGH' region motif. Positions 580–584 (KMSKS) match the 'KMSKS' region motif. Residue Lys-583 coordinates ATP.

The protein belongs to the class-I aminoacyl-tRNA synthetase family.

It localises to the cytoplasm. The catalysed reaction is tRNA(Leu) + L-leucine + ATP = L-leucyl-tRNA(Leu) + AMP + diphosphate. The sequence is that of Leucine--tRNA ligase from Ureaplasma parvum serovar 3 (strain ATCC 27815 / 27 / NCTC 11736).